The sequence spans 473 residues: 6-phospho-beta-glucosidase (473 aa).

The Proton donor role is filled by glutamate 174. The active-site Nucleophile is the glutamate 366.

The protein belongs to the glycosyl hydrolase 1 family.

The enzyme catalyses 6-phospho-beta-D-glucosyl-(1-&gt;4)-D-glucose + H2O = D-glucose 6-phosphate + D-glucose. The protein is 6-phospho-beta-glucosidase (abgA) of Clostridium longisporum.